Consider the following 270-residue polypeptide: Putative pyruvate, phosphate dikinase regulatory protein (270 aa).

151–158 (GVSRTSKT) lines the ADP pocket.

Belongs to the pyruvate, phosphate/water dikinase regulatory protein family. PDRP subfamily.

It carries out the reaction N(tele)-phospho-L-histidyl/L-threonyl-[pyruvate, phosphate dikinase] + ADP = N(tele)-phospho-L-histidyl/O-phospho-L-threonyl-[pyruvate, phosphate dikinase] + AMP + H(+). The catalysed reaction is N(tele)-phospho-L-histidyl/O-phospho-L-threonyl-[pyruvate, phosphate dikinase] + phosphate + H(+) = N(tele)-phospho-L-histidyl/L-threonyl-[pyruvate, phosphate dikinase] + diphosphate. Its function is as follows. Bifunctional serine/threonine kinase and phosphorylase involved in the regulation of the pyruvate, phosphate dikinase (PPDK) by catalyzing its phosphorylation/dephosphorylation. This is Putative pyruvate, phosphate dikinase regulatory protein from Streptococcus gordonii (strain Challis / ATCC 35105 / BCRC 15272 / CH1 / DL1 / V288).